The sequence spans 181 residues: Inner membrane-spanning protein YciB (181 aa).

5 helical membrane-spanning segments follow: residues 10 to 30, 50 to 70, 80 to 100, 120 to 140, and 148 to 168; these read LIIF…GALI, MQLI…ALHD, IVYV…KPAI, WAWV…AYHL, and FKVF…GGYI.

The protein belongs to the YciB family.

It localises to the cell inner membrane. Plays a role in cell envelope biogenesis, maintenance of cell envelope integrity and membrane homeostasis. The sequence is that of Inner membrane-spanning protein YciB from Vibrio cholerae serotype O1 (strain ATCC 39315 / El Tor Inaba N16961).